The primary structure comprises 643 residues: Carboxy-terminal kinesin 2 (643 aa).

2 disordered regions span residues 1 to 42 and 81 to 101; these read MDST…SSLE and MRPK…KTKV. Positions 1-116 are globular; the sequence is MDSTDKKVQV…QPAAIGAEKK (116 aa). Residues 88–101 are compositionally biased toward polar residues; the sequence is PGITSTSFSGKTKV. A coiled-coil region spans residues 117–296; it reads KRAAWDLKGQ…LVQELKGNIR (180 aa). Positions 294–633 constitute a Kinesin motor domain; that stretch reads NIRVFCRVRP…LRFASKVNEC (340 aa). 386–393 is an ATP binding site; the sequence is GQTGSGKT.

The protein belongs to the TRAFAC class myosin-kinesin ATPase superfamily. Kinesin family. NCD subfamily.

It is found in the cytoplasm. The protein localises to the cytoskeleton. Promotes mitotic spindle assembly. In Xenopus laevis (African clawed frog), this protein is Carboxy-terminal kinesin 2.